A 188-amino-acid polypeptide reads, in one-letter code: Large ribosomal subunit protein eL18 (188 aa).

A Glycyl lysine isopeptide (Lys-Gly) (interchain with G-Cter in SUMO2) cross-link involves residue Lys-119. Residue Ser-130 is modified to Phosphoserine. Residues 151–188 (HFGKAPGTPHSHTKPYVRSKGRKFERARGRRASRGYKN) are disordered. Thr-158 is subject to Phosphothreonine. Basic residues-rich tracts occupy residues 161 to 171 (SHTKPYVRSKG) and 178 to 188 (RGRRASRGYKN). Lys-164 is covalently cross-linked (Glycyl lysine isopeptide (Lys-Gly) (interchain with G-Cter in SUMO2)).

It belongs to the eukaryotic ribosomal protein eL18 family. As to quaternary structure, component of the large ribosomal subunit.

It localises to the cytoplasm. The protein resides in the cytosol. It is found in the rough endoplasmic reticulum. In terms of biological role, component of the large ribosomal subunit. The ribosome is a large ribonucleoprotein complex responsible for the synthesis of proteins in the cell. The sequence is that of Large ribosomal subunit protein eL18 (RPL18) from Canis lupus familiaris (Dog).